The following is a 436-amino-acid chain: 3-ketoacyl-CoA thiolase (436 aa).

Cys99 acts as the Acyl-thioester intermediate in catalysis. Catalysis depends on proton acceptor residues His392 and Cys422.

This sequence belongs to the thiolase-like superfamily. Thiolase family. As to quaternary structure, heterotetramer of two alpha chains (FadJ) and two beta chains (FadI).

It is found in the cytoplasm. It carries out the reaction an acyl-CoA + acetyl-CoA = a 3-oxoacyl-CoA + CoA. It functions in the pathway lipid metabolism; fatty acid beta-oxidation. Its function is as follows. Catalyzes the final step of fatty acid oxidation in which acetyl-CoA is released and the CoA ester of a fatty acid two carbons shorter is formed. In Pseudoalteromonas atlantica (strain T6c / ATCC BAA-1087), this protein is 3-ketoacyl-CoA thiolase.